We begin with the raw amino-acid sequence, 546 residues long: Calnexin homolog (546 aa).

Residues 1-25 (MGERKGIPMALGLLAMILFFIASSS) form the signal peptide. Residues 26–475 (SHLVRASDDA…EKAEKQPNLT (450 aa)) are Lumenal-facing. The Ca(2+) site is built by S43 and D74. C117 and C152 are disulfide-bonded. Positions 121, 123, 143, and 150 each coordinate an alpha-D-glucoside. The tract at residues 217 to 329 (LSSEDFEPPL…PGCGEWKRPT (113 aa)) is disordered. The tract at residues 232 to 365 (IPDPDDKKPE…REIPNPEYFE (134 aa)) is p domain (Extended arm). Residues 233 to 249 (PDPDDKKPEDWDERAKI) show a composition bias toward basic and acidic residues. 5 tandem repeats follow at residues 234-245 (DPDDKKPEDWDE), 251-262 (DPSAVKPDDWDE), 270-281 (DEEAEKPEGWLD), 289-300 (DPEATKPEDWDD), and 304-314 (GEWEAPKIENP). 2 4 X approximate repeats regions span residues 234-300 (DPDD…DWDD) and 304-361 (GEWE…IPNP). 2 stretches are compositionally biased toward acidic residues: residues 259–290 (DWDE…IDDP) and 297–306 (DWDDEEDGEW). C316 and C322 form a disulfide bridge. Tandem repeats lie at residues 323–333 (GEWKRPTKRNP), 337–347 (GKWSAPYIDNP), and 351–361 (GIWKPREIPNP). An alpha-D-glucoside is bound at residue E380. D391 contacts Ca(2+). N473 carries N-linked (GlcNAc...) asparagine glycosylation. The chain crosses the membrane as a helical span at residues 476 to 496 (IGILVAVVVVFVSIFFRLIFG). At 497–546 (GKKPAKVEKKPERTEASNNQGSGENEENKEKEKQKEEASNAARRRPRRET) the chain is on the cytoplasmic side. Composition is skewed to basic and acidic residues over residues 501-511 (AKVEKKPERTE) and 522-534 (EENK…KEEA). The interval 501 to 546 (AKVEKKPERTEASNNQGSGENEENKEKEKQKEEASNAARRRPRRET) is disordered.

It belongs to the calreticulin family.

The protein localises to the endoplasmic reticulum membrane. Functionally, calcium-binding protein that interacts with newly synthesized monoglucosylated glycoproteins in the endoplasmic reticulum. It may act in assisting protein assembly and/or in the retention within the ER of unassembled protein subunits. It seems to play a major role in the quality control apparatus of the ER by the retention of incorrectly folded proteins. The chain is Calnexin homolog from Glycine max (Soybean).